We begin with the raw amino-acid sequence, 322 residues long: Probable transcription factor KAN3 (322 aa).

The disordered stretch occupies residues 1 to 35 (MELFPSQPDLYLKISRRREEEQEKESQELQEQEVE). A compositionally biased stretch (basic and acidic residues) spans 17–35 (RREEEQEKESQELQEQEVE). Residues 161 to 221 (GVRAPRMRWT…HLQMYRTIKS (61 aa)) enclose the HTH myb-type domain. The H-T-H motif DNA-binding region spans 192-217 (PKSVLELMDVQDLTLAHVKSHLQMYR). Disordered stretches follow at residues 222–244 (TEKP…NSER) and 267–322 (KASS…NLSP). Polar residues-rich tracts occupy residues 224–241 (KPTT…SQVN) and 299–322 (LTGT…NLSP).

As to expression, expressed in developing phloem.

It is found in the nucleus. Functionally, probable transcription factor that regulates lateral organ polarity. Plays a role in lateral root formation and development. This chain is Probable transcription factor KAN3 (KAN3), found in Arabidopsis thaliana (Mouse-ear cress).